We begin with the raw amino-acid sequence, 1144 residues long: Type II inositol polyphosphate 5-phosphatase 14 (1144 aa).

Disordered stretches follow at residues 15–67 (ASLV…FDSS) and 81–118 (GRTS…DDIE). WD repeat units follow at residues 158–196 (ETQT…EVGC), 216–255 (VPTS…TTTA), 269–307 (AHRG…KSLV), 445–483 (EDTR…LREV), and 524–561 (SHNE…PLDS). Catalytic regions lie at residues 791 to 807 (DLVA…FGIT) and 870 to 885 (KKRI…YRDN). Lys-949 participates in a covalent cross-link: Glycyl lysine isopeptide (Lys-Gly) (interchain with G-Cter in ubiquitin). Over residues 1111 to 1131 (TTMTKNLEGSTRYQTDANRGG) the composition is skewed to polar residues. A disordered region spans residues 1111 to 1144 (TTMTKNLEGSTRYQTDANRGGSTRHRTDDSTRRG). Residues 1135 to 1144 (HRTDDSTRRG) show a composition bias toward basic and acidic residues.

Belongs to the inositol polyphosphate 5-phosphatase family. It depends on Mg(2+) as a cofactor. As to expression, expressed in young seedlings and flowers.

The catalysed reaction is a 1,2-diacyl-sn-glycero-3-phospho-(1D-myo-inositol-4,5-bisphosphate) + H2O = a 1,2-diacyl-sn-glycero-3-phospho-(1D-myo-inositol 4-phosphate) + phosphate. It carries out the reaction a 1,2-diacyl-sn-glycero-3-phospho-(1D-myo-inositol-3,4,5-trisphosphate) + H2O = a 1,2-diacyl-sn-glycero-3-phospho-(1D-myo-inositol-3,4-bisphosphate) + phosphate. It catalyses the reaction 1D-myo-inositol 1,4,5-trisphosphate + H2O = 1D-myo-inositol 1,4-bisphosphate + phosphate. Has phosphatase activity toward PtdIns(4,5)P2, PtdIns(3,4,5)P3 and Ins(1,4,5)P3. The protein is Type II inositol polyphosphate 5-phosphatase 14 of Arabidopsis thaliana (Mouse-ear cress).